Here is a 111-residue protein sequence, read N- to C-terminus: Cytochrome bo(3) ubiquinol oxidase subunit 4 (111 aa).

Residues 1–17 are Cytoplasmic-facing; that stretch reads MSSAAHDNHGAGHGSLG. A helical transmembrane segment spans residues 18-38; that stretch reads SYAIGFVLSVILTAIPFYMVM. The Periplasmic segment spans residues 39–46; that stretch reads DGGFSRHA. Residues 47 to 67 traverse the membrane as a helical segment; the sequence is TILTMVVLGLVQVVVHLICFL. Residues 68-80 lie on the Cytoplasmic side of the membrane; sequence HMNMSSEGRWNVM. The chain crosses the membrane as a helical span at residues 81 to 101; the sequence is AFIFTVIVILLVVGLSLWIIF. Topologically, residues 102 to 111 are periplasmic; sequence SADMLMMPMP.

It belongs to the cytochrome c oxidase bacterial subunit 4 family. Heterooctamer of two A chains, two B chains, two C chains and two D chains.

The protein resides in the cell inner membrane. Functionally, cytochrome bo(3) ubiquinol terminal oxidase is the component of the aerobic respiratory chain of E.coli that predominates when cells are grown at high aeration. Has proton pump activity across the membrane in addition to electron transfer, pumping 2 protons/electron. The protein is Cytochrome bo(3) ubiquinol oxidase subunit 4 (cyoD) of Pseudomonas aeruginosa (strain ATCC 15692 / DSM 22644 / CIP 104116 / JCM 14847 / LMG 12228 / 1C / PRS 101 / PAO1).